Reading from the N-terminus, the 334-residue chain is Phosphoribosylformylglycinamidine cyclo-ligase (334 aa).

Belongs to the AIR synthase family.

Its subcellular location is the cytoplasm. It catalyses the reaction 2-formamido-N(1)-(5-O-phospho-beta-D-ribosyl)acetamidine + ATP = 5-amino-1-(5-phospho-beta-D-ribosyl)imidazole + ADP + phosphate + H(+). The protein operates within purine metabolism; IMP biosynthesis via de novo pathway; 5-amino-1-(5-phospho-D-ribosyl)imidazole from N(2)-formyl-N(1)-(5-phospho-D-ribosyl)glycinamide: step 2/2. The protein is Phosphoribosylformylglycinamidine cyclo-ligase of Thermococcus gammatolerans (strain DSM 15229 / JCM 11827 / EJ3).